Here is a 390-residue protein sequence, read N- to C-terminus: uncharacterized protein (390 aa).

This is an uncharacterized protein from Acanthamoeba polyphaga (Amoeba).